A 287-amino-acid polypeptide reads, in one-letter code: Cuticle collagen 38 (287 aa).

Residues 1–19 (MSKYLVPVCASISLVAVFG) form the signal peptide. The tract at residues 95–287 (QGCPPGPPGP…CPCPARAKKH (193 aa)) is disordered. A compositionally biased stretch (pro residues) spans 98–107 (PPGPPGPPGL). Collagen-like domains lie at 145 to 200 (QGPP…GSEG) and 215 to 273 (GQPG…SIGP). The segment covering 184–205 (TGEQGPQGEPGTEGSEGPTGQD) has biased composition (low complexity). Over residues 206-215 (GTIGGPGLPG) the composition is skewed to gly residues. The segment covering 238–252 (DGEQGPQGPQGPDGQ) has biased composition (low complexity).

This sequence belongs to the cuticular collagen family. As to quaternary structure, collagen polypeptide chains are complexed within the cuticle by disulfide bonds and other types of covalent cross-links.

The protein localises to the nucleus. In terms of biological role, probable cuticular collagen-like protein. Nematode cuticles are composed largely of collagen-like proteins. The cuticle functions both as an exoskeleton and as a barrier to protect the worm from its environment. Acts downstream of the Wnt signaling pathway, perhaps in the formation of the adult cuticle. The protein is Cuticle collagen 38 of Caenorhabditis elegans.